We begin with the raw amino-acid sequence, 375 residues long: tRNA-specific 2-thiouridylase MnmA (375 aa).

ATP-binding positions include 18–25 (GMSGGVDS) and M44. Residues 104–106 (NPD) form an interaction with target base in tRNA region. The Nucleophile role is filled by C109. The cysteines at positions 109 and 206 are disulfide-linked. ATP is bound at residue G134. An interaction with tRNA region spans residues 156-158 (KDQ). Catalysis depends on C206, which acts as the Cysteine persulfide intermediate. The interval 318 to 319 (RY) is interaction with tRNA.

The protein belongs to the MnmA/TRMU family.

The protein localises to the cytoplasm. It carries out the reaction S-sulfanyl-L-cysteinyl-[protein] + uridine(34) in tRNA + AH2 + ATP = 2-thiouridine(34) in tRNA + L-cysteinyl-[protein] + A + AMP + diphosphate + H(+). In terms of biological role, catalyzes the 2-thiolation of uridine at the wobble position (U34) of tRNA, leading to the formation of s(2)U34. The polypeptide is tRNA-specific 2-thiouridylase MnmA (Colwellia psychrerythraea (strain 34H / ATCC BAA-681) (Vibrio psychroerythus)).